The sequence spans 153 residues: Ubiquitin-conjugating enzyme E2 36 (153 aa).

Residues 5-151 enclose the UBC core domain; sequence NLPRRIIKET…AKEWTRLYAS (147 aa). The Glycyl thioester intermediate role is filled by C89.

This sequence belongs to the ubiquitin-conjugating enzyme family. In terms of assembly, interacts with yeast and human Mms2, with the RING domain of RGLG2 and with UEV1A, UEV1B, UEV1C and UEV1D. In terms of tissue distribution, ubiquitously expressed at low level.

The catalysed reaction is S-ubiquitinyl-[E1 ubiquitin-activating enzyme]-L-cysteine + [E2 ubiquitin-conjugating enzyme]-L-cysteine = [E1 ubiquitin-activating enzyme]-L-cysteine + S-ubiquitinyl-[E2 ubiquitin-conjugating enzyme]-L-cysteine.. It participates in protein modification; protein ubiquitination. In terms of biological role, catalyzes the synthesis of non-canonical poly-ubiquitin chains that are linked through 'Lys-63'. This type of poly-ubiquitination does not lead to protein degradation by the proteasome. Mediates transcriptional activation of target genes. Required for postreplication repair of UV-damaged DNA and for adapting root developmental programs to suboptimal availability of iron. The protein is Ubiquitin-conjugating enzyme E2 36 (UBC36) of Arabidopsis thaliana (Mouse-ear cress).